The following is a 324-amino-acid chain: Acetyl-coenzyme A carboxylase carboxyl transferase subunit alpha (324 aa).

The CoA carboxyltransferase C-terminal domain occupies 44–298 (ILQRKLLNLK…KNKIRDQLDF (255 aa)).

The protein belongs to the AccA family. As to quaternary structure, acetyl-CoA carboxylase is a heterohexamer composed of biotin carboxyl carrier protein (accB), biotin carboxylase (accC) and two subunits each of ACCase subunit alpha (accA) and ACCase subunit beta (accD).

The protein resides in the plastid. The protein localises to the chloroplast. The catalysed reaction is N(6)-carboxybiotinyl-L-lysyl-[protein] + acetyl-CoA = N(6)-biotinyl-L-lysyl-[protein] + malonyl-CoA. Its pathway is lipid metabolism; malonyl-CoA biosynthesis; malonyl-CoA from acetyl-CoA: step 1/1. In terms of biological role, component of the acetyl coenzyme A carboxylase (ACC) complex. First, biotin carboxylase catalyzes the carboxylation of biotin on its carrier protein (BCCP) and then the CO(2) group is transferred by the carboxyltransferase to acetyl-CoA to form malonyl-CoA. This Cyanidium caldarium (Red alga) protein is Acetyl-coenzyme A carboxylase carboxyl transferase subunit alpha.